The chain runs to 307 residues: tRNA pseudouridine synthase B (307 aa).

Asp-45 acts as the Nucleophile in catalysis.

It belongs to the pseudouridine synthase TruB family. Type 1 subfamily.

It catalyses the reaction uridine(55) in tRNA = pseudouridine(55) in tRNA. Functionally, responsible for synthesis of pseudouridine from uracil-55 in the psi GC loop of transfer RNAs. The chain is tRNA pseudouridine synthase B from Heliobacterium mobile (Heliobacillus mobilis).